A 96-amino-acid polypeptide reads, in one-letter code: UPF0235 protein Shewmr4_1190 (96 aa).

Belongs to the UPF0235 family.

This Shewanella sp. (strain MR-4) protein is UPF0235 protein Shewmr4_1190.